The sequence spans 177 residues: NADH-quinone oxidoreductase subunit B (177 aa).

The [4Fe-4S] cluster site is built by cysteine 56, cysteine 57, cysteine 121, and cysteine 151.

It belongs to the complex I 20 kDa subunit family. As to quaternary structure, NDH-1 is composed of 14 different subunits. Subunits NuoB, C, D, E, F, and G constitute the peripheral sector of the complex. [4Fe-4S] cluster is required as a cofactor.

It is found in the cell inner membrane. The catalysed reaction is a quinone + NADH + 5 H(+)(in) = a quinol + NAD(+) + 4 H(+)(out). In terms of biological role, NDH-1 shuttles electrons from NADH, via FMN and iron-sulfur (Fe-S) centers, to quinones in the respiratory chain. Couples the redox reaction to proton translocation (for every two electrons transferred, four hydrogen ions are translocated across the cytoplasmic membrane), and thus conserves the redox energy in a proton gradient. This is NADH-quinone oxidoreductase subunit B from Sphingopyxis alaskensis (strain DSM 13593 / LMG 18877 / RB2256) (Sphingomonas alaskensis).